The chain runs to 293 residues: HTH-type transcriptional regulator HdfR (293 aa).

In terms of domain architecture, HTH lysR-type spans 1-58 (MDTELLKTFLEVSRTRHFGRAAESLYLTQSAVSFRIRQLENQLGANLFTRHRNNIRLT). Residues 18–37 (FGRAAESLYLTQSAVSFRIR) constitute a DNA-binding region (H-T-H motif).

Belongs to the LysR transcriptional regulatory family.

In terms of biological role, negatively regulates the transcription of the flagellar master operon flhDC by binding to the upstream region of the operon. The protein is HTH-type transcriptional regulator HdfR of Yersinia pseudotuberculosis serotype O:1b (strain IP 31758).